A 443-amino-acid polypeptide reads, in one-letter code: Transcription factor E2F2 (443 aa).

A disordered region spans residues 1–22 (MLRAPRTLAPATAQPTKSLPAL). Residues 67–107 (ATPHGPEGQIVRCAPAGRLPAKRKLDLEGIGRPTVPEFRTP) form a cyclin A/CDK2 binding region. The DNA-binding element occupies 109–198 (GKCIRVDGLP…KNNIQWVGRE (90 aa)). The interval 157-178 (LNWAAEVLDVQKRRIYDITNVL) is leucine-zipper. A DEF box motif is present at residues 162 to 198 (EVLDVQKRRIYDITNVLEGIQLIRKKSKNNIQWVGRE). The segment at 199-291 (LFEDPTRPSR…PDRAEENLQI (93 aa)) is dimerization. Residues 306–341 (PEEGQEPDSPAKEALPSTSALSPIPDCAQPGCSTDS) form a disordered region. Residues 361-443 (PPPPLPPAPS…SYDLGDLLIN (83 aa)) are transactivation. The segment at 416-433 (DEYLWGMDEGEGISDLFD) is retinoblastoma protein binding.

Belongs to the E2F/DP family. In terms of assembly, component of the DRTF1/E2F transcription factor complex. Forms heterodimers with DP family members. The E2F2 complex binds specifically hypophosphorylated retinoblastoma protein RB1. During the cell cycle, RB1 becomes phosphorylated in mid-to-late G1 phase, detaches from the DRTF1/E2F complex, rendering E2F transcriptionally active. Viral oncoproteins, notably E1A, T-antigen and HPV E7, are capable of sequestering RB protein, thus releasing the active complex. Binds EAPP. In terms of processing, phosphorylated by CDK2 and cyclin A-CDK2 in the S-phase.

It is found in the nucleus. Functionally, transcription activator that binds DNA cooperatively with DP proteins through the E2 recognition site, 5'-TTTC[CG]CGC-3' found in the promoter region of a number of genes whose products are involved in cell cycle regulation or in DNA replication. The DRTF1/E2F complex functions in the control of cell-cycle progression from g1 to s phase. E2F2 binds specifically to RB1 in a cell-cycle dependent manner. The polypeptide is Transcription factor E2F2 (E2f2) (Mus musculus (Mouse)).